We begin with the raw amino-acid sequence, 147 residues long: 6-pyruvoyl tetrahydrobiopterin synthase (147 aa).

A Zn(2+)-binding site is contributed by His26. Cys45 acts as the Proton acceptor in catalysis. Zn(2+) is bound by residues His51 and His53. Active-site charge relay system residues include His92 and Glu136.

Belongs to the PTPS family. In terms of assembly, homohexamer formed of two homotrimers in a head to head fashion. Zn(2+) serves as cofactor.

It carries out the reaction 7,8-dihydroneopterin 3'-triphosphate = 6-pyruvoyl-5,6,7,8-tetrahydropterin + triphosphate + H(+). Its pathway is cofactor biosynthesis; tetrahydrobiopterin biosynthesis; tetrahydrobiopterin from 7,8-dihydroneopterin triphosphate: step 1/3. Functionally, involved in the biosynthesis of tetrahydrobiopterin, an essential cofactor of aromatic amino acid hydroxylases. Catalyzes the transformation of 7,8-dihydroneopterin triphosphate into 6-pyruvoyl tetrahydropterin. This is 6-pyruvoyl tetrahydrobiopterin synthase (pts) from Poecilia reticulata (Guppy).